Here is a 555-residue protein sequence, read N- to C-terminus: Heterochromatin protein 1-binding protein 3 (555 aa).

N-acetylalanine is present on A2. Position 6 is a phosphoserine (S6). A disordered region spans residues 29 to 134; that stretch reads KLGEKVEDNT…KEKKVKKTIP (106 aa). A Phosphothreonine modification is found at T51. Residues 51-67 show a composition bias toward basic and acidic residues; it reads TPPKSKLAEGVEEKPEP. K64 participates in a covalent cross-link: Glycyl lysine isopeptide (Lys-Gly) (interchain with G-Cter in SUMO2). Position 85 is a phosphothreonine (T85). Residue K97 forms a Glycyl lysine isopeptide (Lys-Gly) (interchain with G-Cter in SUMO2) linkage. Over residues 100–127 the composition is skewed to basic and acidic residues; sequence PENEEKEENKPSEETKKDEKDQSKEKEK. Phosphoserine is present on residues S142, S155, and S156. The region spanning 157–232 is the H15 1 domain; it reads PRPKMDAILT…GASGSFVVVQ (76 aa). Position 190 is an N6-acetyllysine (K190). The disordered stretch occupies residues 227-254; sequence SFVVVQKSRKPPQKSRNRKNRSSAVDPE. Residues 233 to 247 show a composition bias toward basic residues; it reads KSRKPPQKSRNRKNR. Phosphoserine occurs at positions 248 and 249. H15 domains are found at residues 255–330 and 337–413; these read PQVK…QLKK and LGGS…QLCF. Residue K258 forms a Glycyl lysine isopeptide (Lys-Gly) (interchain with G-Cter in SUMO2) linkage. Positions 422 to 555 are disordered; that stretch reads LFPKKEPDDS…TMKKSFKAKK (134 aa). Positions 430 to 452 are enriched in acidic residues; sequence DSKDEDEDEDEDDSSEEDSEDEE. A phosphoserine mark is found at S443, S444, and S448. Positions 491–512 are enriched in basic residues; sequence GKTRPLPKKAPPKAKSPAKKAR. Residues 513–532 are compositionally biased toward low complexity; that stretch reads PSPSVIKKPSGSSSKKPAAS. A compositionally biased stretch (basic residues) spans 545-555; it reads STMKKSFKAKK.

As to quaternary structure, interacts (via PxVxL motif) with CBX5.

The protein resides in the nucleus. Its subcellular location is the chromosome. Component of heterochromatin that maintains heterochromatin integrity during G1/S progression and regulates the duration of G1 phase to critically influence cell proliferative capacity. May play a role in hypoxia-induced oncogenesis. The protein is Heterochromatin protein 1-binding protein 3 (HP1BP3) of Bos taurus (Bovine).